The chain runs to 337 residues: Glyceraldehyde-3-phosphate dehydrogenase (337 aa).

Residues 12–13 (RI), D34, and R79 contribute to the NAD(+) site. Residues 150–152 (SCT), T181, 210–211 (TG), and R233 contribute to the D-glyceraldehyde 3-phosphate site. The Nucleophile role is filled by C151. N315 is an NAD(+) binding site.

This sequence belongs to the glyceraldehyde-3-phosphate dehydrogenase family. As to quaternary structure, homotetramer.

Its subcellular location is the cytoplasm. It catalyses the reaction D-glyceraldehyde 3-phosphate + phosphate + NAD(+) = (2R)-3-phospho-glyceroyl phosphate + NADH + H(+). The protein operates within carbohydrate degradation; glycolysis; pyruvate from D-glyceraldehyde 3-phosphate: step 1/5. The polypeptide is Glyceraldehyde-3-phosphate dehydrogenase (GPD) (Ajellomyces capsulatus (Darling's disease fungus)).